A 52-amino-acid chain; its full sequence is ATP synthase protein 8 (52 aa).

Residues 6 to 26 (PINGFVILCSISLMLLTLLIN) traverse the membrane as a helical segment.

The protein belongs to the ATPase protein 8 family. F-type ATPases have 2 components, CF(1) - the catalytic core - and CF(0) - the membrane proton channel.

The protein localises to the mitochondrion membrane. In terms of biological role, mitochondrial membrane ATP synthase (F(1)F(0) ATP synthase or Complex V) produces ATP from ADP in the presence of a proton gradient across the membrane which is generated by electron transport complexes of the respiratory chain. F-type ATPases consist of two structural domains, F(1) - containing the extramembraneous catalytic core and F(0) - containing the membrane proton channel, linked together by a central stalk and a peripheral stalk. During catalysis, ATP synthesis in the catalytic domain of F(1) is coupled via a rotary mechanism of the central stalk subunits to proton translocation. Part of the complex F(0) domain. Minor subunit located with subunit a in the membrane. This Albinaria turrita (Door snail) protein is ATP synthase protein 8 (MT-ATP8).